The primary structure comprises 66 residues: Phylloseptin-H8 (66 aa).

An N-terminal signal peptide occupies residues 1 to 22 (MAFLKKSLFLVLFLGLVSLSIC). The propeptide occupies 23–44 (EEEKRETEEEENDQEEDDKSEE). The interval 25–44 (EKRETEEEENDQEEDDKSEE) is disordered. The span at 30-41 (EEEENDQEEDDK) shows a compositional bias: acidic residues. The residue at position 65 (L65) is a Leucine amide.

As to expression, expressed by the skin glands.

The protein resides in the secreted. Its function is as follows. Has antimicrobial activity. The protein is Phylloseptin-H8 of Pithecopus hypochondrialis (Orange-legged leaf frog).